We begin with the raw amino-acid sequence, 450 residues long: MSTHVTFDYSKALSFIGEHEITYLRDAVKVTHHAIHEKTGAGNDFLGWVDLPLQYDKEEFARIQKCAEKIKNDSDILLVVGIGGSYLGARAAIEMLNHSFYNTLSKEQRKTPQVLFVGQNISSTYMKDLMDVLEGKDFSINVISKSGTTTEPALAFRIFRKLLEEKYGKEEARKRIYATTDKARGALKTLADNEGYETFVIPDDVGGRFSVLTPVGLLPIAVSGLNIEEMMKGAAAGHDDFGTSELEENPAYQYAVVRNALYNKGKTIEMLVNYEPALQYFAEWWKQLFGESEGKDQKGIFPSSANFSTDLHSLGQYVQEGRRDLFETVLKVGKPTHELTIESEENDLDGLNYLAGETVDFVNTKAYEGTLLAHSDGGVPNLIVNIPELNEYTFGYLVYFFEKACAMSGYLLGVNPFDQPGVEAYKKNMFALLGKPGFEELKAELEERLK.

Threonine 39 is subject to Phosphothreonine. Glutamate 291 functions as the Proton donor in the catalytic mechanism. Active-site residues include histidine 312 and lysine 426.

The protein belongs to the GPI family.

The protein localises to the cytoplasm. The enzyme catalyses alpha-D-glucose 6-phosphate = beta-D-fructose 6-phosphate. It functions in the pathway carbohydrate biosynthesis; gluconeogenesis. The protein operates within carbohydrate degradation; glycolysis; D-glyceraldehyde 3-phosphate and glycerone phosphate from D-glucose: step 2/4. Functionally, catalyzes the reversible isomerization of glucose-6-phosphate to fructose-6-phosphate. This chain is Glucose-6-phosphate isomerase, found in Bacillus cereus (strain ATCC 10987 / NRS 248).